Here is a 79-residue protein sequence, read N- to C-terminus: Ferredoxin oxidoreductase 1 subunit ForD (79 aa).

2 consecutive 4Fe-4S ferredoxin-type domains span residues 3–35 (YVAQ…YTDE) and 37–65 (HHAY…RDSI). [4Fe-4S] cluster contacts are provided by C12, C17, C20, C24, C46, C49, C52, and C56.

In terms of assembly, heterotetramer of one alpha, one beta, one delta and one gamma chain. [4Fe-4S] cluster is required as a cofactor.

The sequence is that of Ferredoxin oxidoreductase 1 subunit ForD (forD1) from Aquifex aeolicus (strain VF5).